Here is a 653-residue protein sequence, read N- to C-terminus: Threonine--tRNA ligase (653 aa).

One can recognise a TGS domain in the interval 1–61; it reads MIKITFPDGN…NEDAEVKLFK (61 aa). The interval 243–542 is catalytic; that stretch reads DHRKIGKELE…LIEHTAGKFP (300 aa). 3 residues coordinate Zn(2+): Cys-338, His-389, and His-519.

This sequence belongs to the class-II aminoacyl-tRNA synthetase family. As to quaternary structure, homodimer. Zn(2+) is required as a cofactor.

Its subcellular location is the cytoplasm. The enzyme catalyses tRNA(Thr) + L-threonine + ATP = L-threonyl-tRNA(Thr) + AMP + diphosphate + H(+). Catalyzes the attachment of threonine to tRNA(Thr) in a two-step reaction: L-threonine is first activated by ATP to form Thr-AMP and then transferred to the acceptor end of tRNA(Thr). Also edits incorrectly charged L-seryl-tRNA(Thr). In Porphyromonas gingivalis (strain ATCC BAA-308 / W83), this protein is Threonine--tRNA ligase.